A 317-amino-acid chain; its full sequence is Ceramide reductase (317 aa).

The signal sequence occupies residues 1–27 (MATDARGVVAITGATGFLGRHLVRALA).

The protein belongs to the NAD(P)-dependent epimerase/dehydratase family.

Its subcellular location is the periplasm. The catalysed reaction is N-acyl-3-oxosphinganine + NADH + H(+) = an N-acylsphinganine + NAD(+). It functions in the pathway lipid metabolism; sphingolipid metabolism. Its function is as follows. Involved in de novo bacterial ceramide synthesis. Catalyzes the reduction of bacterial oxidized ceramides to bacterial dihydroceramides. This chain is Ceramide reductase, found in Caulobacter vibrioides (strain NA1000 / CB15N) (Caulobacter crescentus).